Consider the following 220-residue polypeptide: N-(5'-phosphoribosyl)anthranilate isomerase (220 aa).

The protein belongs to the TrpF family.

The enzyme catalyses N-(5-phospho-beta-D-ribosyl)anthranilate = 1-(2-carboxyphenylamino)-1-deoxy-D-ribulose 5-phosphate. It functions in the pathway amino-acid biosynthesis; L-tryptophan biosynthesis; L-tryptophan from chorismate: step 3/5. The sequence is that of N-(5'-phosphoribosyl)anthranilate isomerase from Bordetella petrii (strain ATCC BAA-461 / DSM 12804 / CCUG 43448).